The following is a 182-amino-acid chain: Protein GrpE (182 aa).

A disordered region spans residues 1 to 37 (MSDSSKERKKKFTGMVNKQKSEDQQNNSKQADDLDEL).

It belongs to the GrpE family. In terms of assembly, homodimer.

It is found in the cytoplasm. Participates actively in the response to hyperosmotic and heat shock by preventing the aggregation of stress-denatured proteins, in association with DnaK and GrpE. It is the nucleotide exchange factor for DnaK and may function as a thermosensor. Unfolded proteins bind initially to DnaJ; upon interaction with the DnaJ-bound protein, DnaK hydrolyzes its bound ATP, resulting in the formation of a stable complex. GrpE releases ADP from DnaK; ATP binding to DnaK triggers the release of the substrate protein, thus completing the reaction cycle. Several rounds of ATP-dependent interactions between DnaJ, DnaK and GrpE are required for fully efficient folding. The sequence is that of Protein GrpE from Wolbachia sp. subsp. Brugia malayi (strain TRS).